A 339-amino-acid chain; its full sequence is Transcription initiation factor IIB (339 aa).

A TFIIB-type zinc finger spans residues 39–70 (EELICPVCGSKNIIKDYERAEIVCEMCGCVLQ). 4 residues coordinate Zn(2+): Cys43, Cys46, Cys62, and Cys65. 2 tandem repeats follow at residues 156–239 (SELD…SREL) and 250–331 (DYVP…ELTE).

This sequence belongs to the TFIIB family.

Stabilizes TBP binding to an archaeal box-A promoter. Also responsible for recruiting RNA polymerase II to the pre-initiation complex (DNA-TBP-TFIIB). This Methanococcus maripaludis (strain C7 / ATCC BAA-1331) protein is Transcription initiation factor IIB.